The chain runs to 508 residues: Non-structural protein 1 (508 aa).

A compositionally biased stretch (polar residues) spans 424 to 453; sequence NTESTTTNNAQSPVSDPVNASANVKTSPAG. Positions 424–464 are disordered; sequence NTESTTTNNAQSPVSDPVNASANVKTSPAGTHTDESVMKKE. Over residues 455-464 the composition is skewed to basic and acidic residues; that stretch reads HTDESVMKKE.

The sequence is that of Non-structural protein 1 (Segment-5) from Banna virus (BAV).